The following is a 113-amino-acid chain: Histidine triad nucleotide-binding protein (113 aa).

Zn(2+)-binding residues include Cys-5 and Cys-8. The HIT domain occupies 6–113 (IFCKIAQKQI…GGKKLAWDKL (108 aa)). AMP is bound at residue Asp-31. His-47 serves as a coordination point for Zn(2+). Positions 86, 92, and 94 each coordinate AMP. His-97 contributes to the Zn(2+) binding site. Positions 97 to 101 (HIHFH) match the Histidine triad motif motif. AMP-binding residues include His-99 and His-101. Catalysis depends on His-99, which acts as the Tele-AMP-histidine intermediate.

Belongs to the HINT family.

The protein localises to the nucleus. It is found in the cytoplasm. It catalyses the reaction adenosine 5'-phosphoramidate + H2O = AMP + NH4(+). Its function is as follows. Hydrolyzes purine nucleotide phosphoramidates with a single phosphate group, including adenosine 5'monophosphoramidate (AMP-NH2), adenosine 5'monophosphomorpholidate (AMP-morpholidate) and guanosine 5'monophosphomorpholidate (GMP-morpholidate). Hydrolyzes lysyl-AMP (AMP-N-epsilon-(N-alpha-acetyl lysine methyl ester)) generated by lysine tRNA ligase, as well as Met-AMP, His-AMP and Asp-AMP, lysyl-GMP (GMP-N-epsilon-(N-alpha-acetyl lysine methyl ester)) and AMP-N-alanine methyl ester. May also function as scaffolding protein that mediates protein-protein interactions. In Entamoeba histolytica (strain ATCC 30459 / HM-1:IMSS / ABRM), this protein is Histidine triad nucleotide-binding protein.